A 371-amino-acid chain; its full sequence is Cytoplasmic tRNA 2-thiolation protein 1 (371 aa).

This sequence belongs to the TtcA family. CTU1/NCS6/ATPBD3 subfamily.

Its subcellular location is the cytoplasm. It participates in tRNA modification; 5-methoxycarbonylmethyl-2-thiouridine-tRNA biosynthesis. Functionally, plays a central role in 2-thiolation of mcm(5)S(2)U at tRNA wobble positions of tRNA(Lys), tRNA(Glu) and tRNA(Gln). Directly binds tRNAs and probably acts by catalyzing adenylation of tRNAs, an intermediate required for 2-thiolation. It is unclear whether it acts as a sulfurtransferase that transfers sulfur from thiocarboxylated URM1 onto the uridine of tRNAs at wobble position. Prior mcm(5) tRNA modification by the elongator complex is required for 2-thiolation. May also be involved in protein urmylation. In Kluyveromyces lactis (strain ATCC 8585 / CBS 2359 / DSM 70799 / NBRC 1267 / NRRL Y-1140 / WM37) (Yeast), this protein is Cytoplasmic tRNA 2-thiolation protein 1.